Here is a 392-residue protein sequence, read N- to C-terminus: Pyoverdine export membrane fusion protein PvdR (392 aa).

Positions 1–36 form a signal peptide, tat-type signal; the sequence is MRRSTHTRRRLLLGGLGLLGLGSLLAWTSLPFGAQP. A coiled-coil region spans residues 109 to 181; the sequence is IDNLKAQLAE…NASLRSDEAE (73 aa). A disordered region spans residues 267–286; sequence PPKPLDQTSQGGGSPASATA.

This sequence belongs to the membrane fusion protein (MFP) (TC 8.A.1) family. In terms of assembly, part of the tripartite efflux system PvdRT-OpmQ, which is composed of an inner membrane component with both ATPase and permease domains, PvdT, a periplasmic membrane fusion protein, PvdR, and an outer membrane component, OpmQ. In terms of processing, predicted to be exported by the Tat system. The position of the signal peptide cleavage has not been experimentally proven.

It localises to the periplasm. Part of the tripartite efflux system PvdRT-OpmQ required for the secretion into the extracellular milieu of the siderophore pyoverdine (PVD), which is involved in iron acquisition. This subunit is an adapter protein that stimulates the ATPase activity of PvdT and connects the inner and outer membrane components. The system is responsible for export of newly synthesized PVD after the final steps of biosynthesis have taken place in the periplasm. It is also responsible for recycling of PVD after internalization of ferri-PVD into the periplasm by the outer-membrane receptor FpvA and release of iron from PVD, thus making PVD available for new cycles of iron uptake. Contributes to resistance against ampicillin. The polypeptide is Pyoverdine export membrane fusion protein PvdR (Pseudomonas putida (strain ATCC 47054 / DSM 6125 / CFBP 8728 / NCIMB 11950 / KT2440)).